The primary structure comprises 419 residues: Interferon regulatory factor 3 (419 aa).

Residue Thr-3 is modified to Phosphothreonine. Positions 5 to 111 (KPRILPWLVS…DPHKVYEFVT (107 aa)) form a DNA-binding region, IRF tryptophan pentad repeat. A Phosphoserine modification is found at Ser-14. Thr-75 carries the phosphothreonine modification. Phosphoserine is present on residues Ser-97, Ser-123, and Ser-135. Residues 140–419 (PKLFDGLILG…DMDFQATGNI (280 aa)) form a mediates interaction with ZDHHC11 region. Lys-188 is covalently cross-linked (Glycyl lysine isopeptide (Lys-Gly) (interchain with G-Cter in ISG15)). Positions 194–353 (EQWEFEVTAF…MWPQDQPWVK (160 aa)) are interaction with HERC5. Phosphothreonine occurs at positions 230, 237, and 246. Glycyl lysine isopeptide (Lys-Gly) (interchain with G-Cter in ISG15) cross-links involve residues Lys-353 and Lys-359. Lys-359 is subject to N6-acetyllysine. Ser-378 is modified (phosphoserine). Ser-379 bears the Diphosphoserine mark. Phosphoserine; by TBK1 is present on Ser-379. A Phosphoserine; by IKKE modification is found at Ser-388. Ser-390 is subject to Phosphoserine. Residue Thr-396 is modified to Phosphothreonine.

The protein belongs to the IRF family. In terms of assembly, monomer. Homodimer; phosphorylation-induced. Interacts (when phosphorylated) with CREBBP. Interacts with MAVS (via phosphorylated pLxIS motif). Interacts with TICAM1 (via phosphorylated pLxIS motif). Interacts with STING1 (via phosphorylated pLxIS motif). Interacts with IKBKE and TBK1. Interacts with TICAM2. Interacts with RBCK1. Interacts with HERC5. Interacts with DDX3X; the interaction allows the phosphorylation and activation of IRF3 by IKBKE. Interacts with TRIM21 and ULK1, in the presence of TRIM21; this interaction leads to IRF3 degradation by autophagy. Interacts with RIOK3; RIOK3 probably mediates the interaction of TBK1 with IRF3. Interacts with ILRUN; the interaction inhibits IRF3 binding to its DNA consensus sequence. Interacts with LYAR; this interaction impairs IRF3 DNA-binding activity. Interacts with TRAF3. Interacts with ZDHHC11; ZDHHC11 recruits IRF3 to STING1 upon DNA virus infection and thereby promotes IRF3 activation. Interacts with HSP90AA1; the interaction mediates IRF3 association with TOMM70. Interacts with BCL2; the interaction decreases upon Sendai virus infection. Interacts with BAX; the interaction is direct, increases upon virus infection and mediates the formation of the apoptosis complex TOMM70:HSP90AA1:IRF3:BAX. Interacts with DDX56. Interacts with NBR1. Post-translationally, constitutively phosphorylated on many Ser/Thr residues. Activated following phosphorylation by TBK1 and IKBKE. Innate adapter proteins, such as MAVS, STING1 or TICAM1, are first activated by viral RNA, cytosolic DNA, and bacterial lipopolysaccharide (LPS), respectively, leading to activation of the kinases TBK1 and IKBKE. These kinases then phosphorylate the adapter proteins on the pLxIS motif, leading to recruitment of IRF3, thereby licensing IRF3 for phosphorylation by TBK1. Phosphorylation at Ser-379 is followed by pyrophosphorylation at the same residue, promoting phosphorylation at Ser-388. Phosphorylated IRF3 dissociates from the adapter proteins, dimerizes, and then enters the nucleus to induce IFNs. Pyrophosphorylated by UAP1 following phosphorylation at Ser-379 by TBK1. Pyrophosphorylation promotes subsequent phosphorylation at Ser-388, leading to homodimerization of IRF3. In terms of processing, acetylation at Lys-359 by KAT8 inhibits recruimtent to promoters and transcription factor activity. Acetylation by KAT8 is promoted by phosphorylation at Ser-388. Post-translationally, ubiquitinated; ubiquitination involves RBCK1 leading to proteasomal degradation. Polyubiquitinated; ubiquitination involves TRIM21 leading to proteasomal degradation. Ubiquitinated by UBE3C, leading to its degradation. Deubiquitinated by USP5 on both 'Lys-48'-linked unanchored and 'Lys-63'-linked anchored polyubiquitin, leading to inhibition of anti-RNA viral innate immunity. ISGylated by HERC5 resulting in sustained IRF3 activation and in the inhibition of IRF3 ubiquitination by disrupting PIN1 binding. The phosphorylation state of IRF3 does not alter ISGylation. In terms of processing, proteolytically cleaved by apoptotic caspases during apoptosis, leading to its inactivation. Cleavage by CASP3 during virus-induced apoptosis inactivates it, preventing cytokine overproduction.

Its subcellular location is the cytoplasm. It localises to the nucleus. The protein resides in the mitochondrion. In the absence of viral infection, maintained as a monomer in an autoinhibited state. Phosphorylation by TBK1 and IKBKE disrupts this autoinhibition leading to the liberation of the DNA-binding and dimerization activities and its nuclear localization where it can activate type I IFN and ISG genes. Phosphorylation and activation follow the following steps: innate adapter proteins, such as MAVS, STING1 or TICAM1, are first activated by viral RNA, cytosolic DNA and bacterial lipopolysaccharide (LPS), respectively, leading to activation of the kinases TBK1 and IKBKE. These kinases then phosphorylate the adapter proteins on their pLxIS motif, leading to recruitment of IRF3, thereby licensing IRF3 for phosphorylation by TBK1. Phosphorylated IRF3 dissociates from the adapter proteins, dimerizes, and then enters the nucleus to induce IFNs. In terms of biological role, key transcriptional regulator of type I interferon (IFN)-dependent immune responses which plays a critical role in the innate immune response against DNA and RNA viruses. Regulates the transcription of type I IFN genes (IFN-alpha and IFN-beta) and IFN-stimulated genes (ISG) by binding to an interferon-stimulated response element (ISRE) in their promoters. Acts as a more potent activator of the IFN-beta (IFNB) gene than the IFN-alpha (IFNA) gene and plays a critical role in both the early and late phases of the IFNA/B gene induction. Found in an inactive form in the cytoplasm of uninfected cells and following viral infection, double-stranded RNA (dsRNA), or toll-like receptor (TLR) signaling, is phosphorylated by IKBKE and TBK1 kinases. This induces a conformational change, leading to its dimerization and nuclear localization and association with CREB binding protein (CREBBP) to form dsRNA-activated factor 1 (DRAF1), a complex which activates the transcription of the type I IFN and ISG genes. Can activate distinct gene expression programs in macrophages and can induce significant apoptosis in primary macrophages. The polypeptide is Interferon regulatory factor 3 (Irf3) (Mus musculus (Mouse)).